The following is a 217-amino-acid chain: Growth hormone variant (217 aa).

Positions 1–26 are cleaved as a signal peptide; it reads MAAGSRTSLLLAFGLLCLPWLQEGSA. Intrachain disulfides connect C79–C191 and C208–C215. Residue S132 is modified to Phosphoserine. N166 carries an N-linked (GlcNAc...) asparagine glycan. S176 carries the post-translational modification Phosphoserine.

This sequence belongs to the somatotropin/prolactin family. As to expression, expressed in the placenta.

It localises to the secreted. Functionally, plays an important role in growth control. Its major role in stimulating body growth is to stimulate the liver and other tissues to secrete IGF1. It stimulates both the differentiation and proliferation of myoblasts. It also stimulates amino acid uptake and protein synthesis in muscle and other tissues. In Pan troglodytes (Chimpanzee), this protein is Growth hormone variant (GH2).